The following is a 399-amino-acid chain: Organelle RRM domain-containing protein 1, chloroplastic (399 aa).

Residues M1 to S52 constitute a chloroplast transit peptide. The region spanning K295–H373 is the RRM domain. Positions D377 to G399 are disordered.

The protein resides in the plastid. The protein localises to the chloroplast. Involved in C-to-U editing of chloroplastic RNA. Functions as major chloroplastic editing factor. Controls a majority of the chloroplastic editing sites. This chain is Organelle RRM domain-containing protein 1, chloroplastic, found in Oryza sativa subsp. japonica (Rice).